Here is a 514-residue protein sequence, read N- to C-terminus: Cytochrome P450 monooxygenase ptmQ (514 aa).

A helical membrane pass occupies residues 3–23 (YVAQSPWIATLIVTATTYCTL). Residue Asn-148 is glycosylated (N-linked (GlcNAc...) asparagine). Cys-452 is a heme binding site. The N-linked (GlcNAc...) asparagine glycan is linked to Asn-486.

It belongs to the cytochrome P450 family. The cofactor is heme.

The protein resides in the membrane. The protein operates within secondary metabolite biosynthesis. Functionally, cytochrome P450 monooxygenase; part of the gene cluster that mediates the biosynthesis of the indole diterpenes penitrems. The geranylgeranyl diphosphate (GGPP) synthase ptmG catalyzes the first step in penitrem biosynthesis via conversion of farnesyl pyrophosphate and isopentyl pyrophosphate into geranylgeranyl pyrophosphate (GGPP). Condensation of indole-3-glycerol phosphate with GGPP by the prenyl transferase ptmC then forms 3-geranylgeranylindole (3-GGI). Epoxidation by the FAD-dependent monooxygenase ptmM leads to a epoxidized-GGI that is substrate of the terpene cyclase ptmB for cyclization to yield paspaline. Paspaline is subsequently converted to 13-desoxypaxilline by the cytochrome P450 monooxygenase ptmP, the latter being then converted to paxilline by the cytochrome P450 monooxygenase ptmQ. Paxilline is converted to beta-paxitriol via C-10 ketoreduction by the short-chain dehydrogenase ptmH which can be monoprenylated at the C-20 by the indole diterpene prenyltransferase ptmD. A two-step elimination (acetylation and elimination) process performed by the O-acetyltransferase ptmV and ptmI leads to the production of the prenylated form of penijanthine. The FAD-linked oxidoreductase ptmO then converts the prenylated form of penijanthine into PC-M5 which is in turn transformed into PC-M4 by the aromatic dimethylallyltransferase ptmE. Five sequential oxidative transformations performed by the cytochrome P450 monooxygenases ptmK, ptmU, ptmL, ptmN and ptmJ yield the various penitrem compounds. PtmK, ptmU and ptmM are involved in the formation of the key bicyclic ring of penitrem C via the formation of the intermediates secopenitrem D and penitrem D. PtmL catalyzes the epoxidation of penitrem D and C to yield penitrem B and F, respectively. PtmJ catalyzes the last benzylic hydroxylation to convert penitrem B to prenitrem E and penitrem F to penitrem A. The protein is Cytochrome P450 monooxygenase ptmQ of Penicillium ochrochloron.